The following is a 157-amino-acid chain: Tripartite terminase subunit 2 (157 aa).

A disordered region spans residues 1-69 (MSWAKQRVPF…DGEDGHALPD (69 aa)). The span at 11–27 (LDDDDGEEENDVQDDVD) shows a compositional bias: acidic residues.

The protein belongs to the herpesviridae TRM2 protein family. As to quaternary structure, associates with TRM1 and TRM3 to form the tripartite terminase complex.

The protein resides in the host nucleus. Functionally, component of the molecular motor that translocates viral genomic DNA in empty capsid during DNA packaging. Forms a tripartite terminase complex together with TRM1 and TRM3 in the host cytoplasm. Once the complex reaches the host nucleus, it interacts with the capsid portal vertex. This portal forms a ring in which genomic DNA is translocated into the capsid. This chain is Tripartite terminase subunit 2, found in Homo sapiens (Human).